A 198-amino-acid polypeptide reads, in one-letter code: NAD(P)H dehydrogenase (quinone) (198 aa).

The region spanning 4-189 (VLVLYYSMYG…SIARYQGEYV (186 aa)) is the Flavodoxin-like domain. FMN is bound by residues 10–15 (SMYGHI) and 78–80 (TRF). Residue tyrosine 12 participates in NAD(+) binding. A substrate-binding site is contributed by tryptophan 98. FMN is bound by residues 113–118 (STGTGG) and histidine 133.

This sequence belongs to the WrbA family. FMN is required as a cofactor.

It carries out the reaction a quinone + NADH + H(+) = a quinol + NAD(+). The catalysed reaction is a quinone + NADPH + H(+) = a quinol + NADP(+). The chain is NAD(P)H dehydrogenase (quinone) from Escherichia coli O157:H7.